The following is a 258-amino-acid chain: Axonemal dynein light intermediate polypeptide 1 (258 aa).

Disordered regions lie at residues 1–60 and 202–231; these read MIPP…CVPD and DLERQVNEQKAKCEATEKRESERRQVEEKK. A coiled-coil region spans residues 176-255; the sequence is MRKALQAEQG…LKAQLEGIIA (80 aa).

This sequence belongs to the inner dynein arm light chain family. Interacts with CFAP45. Interacts with DYNC1H1.

The protein resides in the cell projection. Its subcellular location is the cilium. It is found in the flagellum. The protein localises to the dynein axonemal particle. It localises to the cytoplasm. In terms of biological role, involved in sperm flagellum assembly. This chain is Axonemal dynein light intermediate polypeptide 1, found in Rattus norvegicus (Rat).